The following is a 634-amino-acid chain: GTP-binding protein 4 (634 aa).

An N-acetylalanine modification is found at A2. K103 carries the post-translational modification N6-acetyllysine; alternate. K103 participates in a covalent cross-link: Glycyl lysine isopeptide (Lys-Gly) (interchain with G-Cter in SUMO2); alternate. Phosphoserine is present on S122. Residues 169–340 (RTLLLCGYPN…VKTEACDRLL (172 aa)) form the OBG-type G domain. Residues 175 to 182 (GYPNVGKS), 221 to 225 (DTPGI), and 289 to 292 (NKCD) contribute to the GTP site. K332 is covalently cross-linked (Glycyl lysine isopeptide (Lys-Gly) (interchain with G-Cter in SUMO2)). Residues S468, S470, and S472 each carry the phosphoserine modification. A disordered region spans residues 495–517 (ILESKEKNTQGPRMPRTAKKVQR). K522 bears the N6-acetyllysine mark. The interval 529–634 (VDMDDKDDAH…KRKAGKKDRR (106 aa)) is disordered. K534 is covalently cross-linked (Glycyl lysine isopeptide (Lys-Gly) (interchain with G-Cter in SUMO2)). Residues 544–554 (RRSRSITRKRK) show a composition bias toward basic residues. S558 bears the Phosphoserine mark. The span at 560 to 572 (PPSSVARSGSCSR) shows a compositional bias: polar residues. Residues 573–585 (TPRDVSGLRDVKM) are compositionally biased toward basic and acidic residues. The segment covering 586 to 604 (VKKAKTMMKNAQKKMNRLG) has biased composition (basic residues). Residues 605-618 (KKGEADRHVFDMKP) show a composition bias toward basic and acidic residues. The segment covering 619–634 (KHLLSGKRKAGKKDRR) has biased composition (basic residues).

Belongs to the TRAFAC class OBG-HflX-like GTPase superfamily. OBG GTPase family. NOG subfamily. As to quaternary structure, associates with pre-60S ribosomal particles. Interacts with MINAS-60 (product of an alternative open reading frame of RBM10).

The protein localises to the nucleus. It is found in the nucleolus. Its function is as follows. Involved in the biogenesis of the 60S ribosomal subunit. Acts as a TP53 repressor, preventing TP53 stabilization and cell cycle arrest. In Homo sapiens (Human), this protein is GTP-binding protein 4.